Reading from the N-terminus, the 675-residue chain is Putative methyl-accepting chemotaxis AlkN (675 aa).

Helical transmembrane passes span 24–44 (IALY…FLLS) and 303–323 (FPSV…FFII). The 52-residue stretch at 343–394 (QRNQAAILRLLDELGDLADGDLTVQATVTEDFTGAIADSINYSIDQLRNLVQ) folds into the HAMP domain. The Methyl-accepting transducer domain maps to 399–635 (SAVQVASAAQ…HISNTMNVIQ (237 aa)).

Belongs to the methyl-accepting chemotaxis (MCP) protein family.

Its subcellular location is the membrane. It participates in hydrocarbon metabolism; alkane degradation. Chemotactic-signal transducers respond to changes in the concentration of attractants and repellents in the environment, transduce a signal from the outside to the inside of the cell, and facilitate sensory adaptation through the variation of the level of methylation. This is Putative methyl-accepting chemotaxis AlkN from Alcanivorax borkumensis (strain ATCC 700651 / DSM 11573 / NCIMB 13689 / SK2).